The sequence spans 883 residues: MKIEKLIIKDFRSHALTKVNFSSGINLIIGQNGSGKSSILDALLVGLYWPSKPKDLKKDDFERINGSGTEITVFFEKGNVKYQIHRNIGRGLAFVKYHDGSSWKTLETGQKPVRDWMEKLVPYDVFLNAIYIRQGEIDAILESDESREKVVRQVLGLDRYENSYKNLLDVRKEIDARIKAIEDYLKSTENIDELIGNLEKELTSVLREINEISPKLPELRGELGGLEKELKELEKTAEELAKARVELKSEEGNLRELEAKKSGIQSMIRETEKRVEELKEKVKELESLEEKAKEYERLSRFYRNFTEGINRIEKLLATYSQQAENLRERIDELSKKEARVKELLKEKEGLQKELGALEEDLKAYQRAKELMANLERLKKRLTLSEEEIEKLEAEIQKARERKEEIMKELEEIGSRRGELKSIAGERNKALMELKKAKGRCPVCGRELTEEHRKELLEKYTAELKEISAEMKELEKREKKLRAELVEVEKTLKKERELFALKEVLEQIRETEEKLKEYDLEKLEEANEKAEELKKKLAGLEGEIKSLEDEIKKGELLKKKLALVEKKLRELEEERASLLGELKKLGFGDVKELEERLKELEPAYKRYIELRPARDELKREEDLLKSLKLDLTAILKEIEKTSKRVEELRKRVEELEKSYDKDRHEELKGKTRELSNELAGLEARLKSLEERRDEVKASLEKLREEKETRKEKAKELEKLKKARERVQRLREKVKAYKNLLKEGALAKVGEMASEIFEELTEEKYSGVTVKAEENKVRLGVVYNGKEYGLGFLSGGERIALGLAFRLALSLYLAGEISLLILDEPTPYLDEERRRRLVDIMQRYLRKIPQVIVVSHDEELKDAADRVIRVSLENGVSVVREAEVG.

Residues Arg12, 32–38, and Gln134 contribute to the ATP site; that span reads NGSGKSS. The stretch at 218 to 420 forms a coiled coil; sequence ELRGELGGLE…EIGSRRGELK (203 aa). The Zinc-hook domain occupies 395–492; that stretch reads IQKARERKEE…ELVEVEKTLK (98 aa). Residues Cys440 and Cys443 each contribute to the Zn(2+) site. 2 coiled-coil regions span residues 452 to 585 and 620 to 741; these read RKEL…KKLG and EDLL…LLKE. 790–795 lines the ATP pocket; sequence FLSGGE.

This sequence belongs to the SMC family. RAD50 subfamily. Homodimer. Forms a heterotetramer composed of two Mre11 subunits and two Rad50 subunits. It depends on Zn(2+) as a cofactor.

Part of the Rad50/Mre11 complex, which is involved in the early steps of DNA double-strand break (DSB) repair. The complex may facilitate opening of the processed DNA ends to aid in the recruitment of HerA and NurA. Rad50 controls the balance between DNA end bridging and DNA resection via ATP-dependent structural rearrangements of the Rad50/Mre11 complex. The chain is DNA double-strand break repair Rad50 ATPase from Thermococcus kodakarensis (strain ATCC BAA-918 / JCM 12380 / KOD1) (Pyrococcus kodakaraensis (strain KOD1)).